We begin with the raw amino-acid sequence, 239 residues long: Ribosomal RNA small subunit methyltransferase A (239 aa).

6 residues coordinate S-adenosyl-L-methionine: Asn23, Ile25, Gly50, Glu72, Asp97, and Asn116.

The protein belongs to the class I-like SAM-binding methyltransferase superfamily. rRNA adenine N(6)-methyltransferase family. RsmA subfamily.

It localises to the cytoplasm. It catalyses the reaction adenosine(1518)/adenosine(1519) in 16S rRNA + 4 S-adenosyl-L-methionine = N(6)-dimethyladenosine(1518)/N(6)-dimethyladenosine(1519) in 16S rRNA + 4 S-adenosyl-L-homocysteine + 4 H(+). Its function is as follows. Specifically dimethylates two adjacent adenosines (A1518 and A1519) in the loop of a conserved hairpin near the 3'-end of 16S rRNA in the 30S particle. May play a critical role in biogenesis of 30S subunits. This is Ribosomal RNA small subunit methyltransferase A from Rickettsia felis (strain ATCC VR-1525 / URRWXCal2) (Rickettsia azadi).